Here is a 1318-residue protein sequence, read N- to C-terminus: DNA-directed RNA polymerase subunit beta' (1318 aa).

Cys-60, Cys-62, Cys-75, and Cys-78 together coordinate Zn(2+). Mg(2+) contacts are provided by Asp-535, Asp-537, and Asp-539. Residues Cys-890, Cys-967, Cys-974, and Cys-977 each coordinate Zn(2+).

It belongs to the RNA polymerase beta' chain family. In terms of assembly, the RNAP catalytic core consists of 2 alpha, 1 beta, 1 beta' and 1 omega subunit. When a sigma factor is associated with the core the holoenzyme is formed, which can initiate transcription. It depends on Mg(2+) as a cofactor. Zn(2+) serves as cofactor.

The enzyme catalyses RNA(n) + a ribonucleoside 5'-triphosphate = RNA(n+1) + diphosphate. Its function is as follows. DNA-dependent RNA polymerase catalyzes the transcription of DNA into RNA using the four ribonucleoside triphosphates as substrates. This Rhodococcus erythropolis (strain PR4 / NBRC 100887) protein is DNA-directed RNA polymerase subunit beta'.